The sequence spans 161 residues: RNA pyrophosphohydrolase (161 aa).

The Nudix hydrolase domain maps to 12-154 (PYRPGVGMMI…KRKLYQAVVK (143 aa)). The Nudix box motif lies at 46–67 (GGIVPGETPSIAAMREMLEEIG).

Belongs to the Nudix hydrolase family. RppH subfamily. Requires a divalent metal cation as cofactor.

In terms of biological role, accelerates the degradation of transcripts by removing pyrophosphate from the 5'-end of triphosphorylated RNA, leading to a more labile monophosphorylated state that can stimulate subsequent ribonuclease cleavage. This chain is RNA pyrophosphohydrolase, found in Rickettsia conorii (strain ATCC VR-613 / Malish 7).